A 139-amino-acid polypeptide reads, in one-letter code: MWLAHSHYTLACESIRSPLCKLPARLGGRTMISEFWEFVRSNFGVISTLIAIFIGAFWLKLDSKYAKKHDLSQLADIARSHDNRLATLESKVENLPTAVDVERLKTLLTDVKGDTKATSRQVDAMSHQVGLLLEAKLKE.

The chain crosses the membrane as a helical span at residues 43–59; that stretch reads FGVISTLIAIFIGAFWL.

It is found in the membrane. This is an uncharacterized protein from Haemophilus influenzae (strain ATCC 51907 / DSM 11121 / KW20 / Rd).